Here is a 479-residue protein sequence, read N- to C-terminus: UDP-N-acetylmuramate--L-alanine ligase (479 aa).

An ATP-binding site is contributed by 128–134 (GAHGKTT).

The protein belongs to the MurCDEF family.

The protein resides in the cytoplasm. It carries out the reaction UDP-N-acetyl-alpha-D-muramate + L-alanine + ATP = UDP-N-acetyl-alpha-D-muramoyl-L-alanine + ADP + phosphate + H(+). The protein operates within cell wall biogenesis; peptidoglycan biosynthesis. In terms of biological role, cell wall formation. The sequence is that of UDP-N-acetylmuramate--L-alanine ligase from Psychrobacter cryohalolentis (strain ATCC BAA-1226 / DSM 17306 / VKM B-2378 / K5).